The primary structure comprises 694 residues: uncharacterized protein (694 aa).

A coiled-coil region spans residues 15–51; sequence HKEKMELLDQFDNERKEWESQWKIMQKKIEELCREVK. 3 disordered regions span residues 259 to 286, 461 to 490, and 643 to 680; these read LKRNETPPVPPPRSTSRNFPSSDSEQAY, QNHSCSKSSEDLKPCDTSSTHTGSISQSND, and NASHGKGFSRPARPANRRLPSRWASRSPSAPPALRRTT. 2 stretches are compositionally biased toward polar residues: residues 272–283 and 476–490; these read STSRNFPSSDSE and DTSSTHTGSISQSND. Positions 663-677 are enriched in low complexity; it reads SRWASRSPSAPPALR.

This is an uncharacterized protein from Homo sapiens (Human).